The following is a 505-amino-acid chain: tRNA-2-methylthio-N(6)-dimethylallyladenosine synthase (505 aa).

The region spanning R14–V132 is the MTTase N-terminal domain. C23, C61, C95, C169, C173, and C176 together coordinate [4Fe-4S] cluster. The Radical SAM core domain occupies R155–E386. One can recognise a TRAM domain in the interval K388 to V456.

It belongs to the methylthiotransferase family. MiaB subfamily. Monomer. It depends on [4Fe-4S] cluster as a cofactor.

It is found in the cytoplasm. It catalyses the reaction N(6)-dimethylallyladenosine(37) in tRNA + (sulfur carrier)-SH + AH2 + 2 S-adenosyl-L-methionine = 2-methylsulfanyl-N(6)-dimethylallyladenosine(37) in tRNA + (sulfur carrier)-H + 5'-deoxyadenosine + L-methionine + A + S-adenosyl-L-homocysteine + 2 H(+). Functionally, catalyzes the methylthiolation of N6-(dimethylallyl)adenosine (i(6)A), leading to the formation of 2-methylthio-N6-(dimethylallyl)adenosine (ms(2)i(6)A) at position 37 in tRNAs that read codons beginning with uridine. In Streptomyces coelicolor (strain ATCC BAA-471 / A3(2) / M145), this protein is tRNA-2-methylthio-N(6)-dimethylallyladenosine synthase.